The primary structure comprises 439 residues: Protein translocase subunit SecY (439 aa).

The next 10 membrane-spanning stretches (helical) occupy residues isoleucine 19–glycine 39, tyrosine 68–leucine 88, tyrosine 116–methionine 136, leucine 151–isoleucine 171, phenylalanine 176–valine 196, tryptophan 216–valine 236, valine 269–leucine 289, tryptophan 312–valine 332, valine 373–glycine 393, and lysine 396–valine 416.

It belongs to the SecY/SEC61-alpha family. In terms of assembly, component of the Sec protein translocase complex. Heterotrimer consisting of SecY, SecE and SecG subunits. The heterotrimers can form oligomers, although 1 heterotrimer is thought to be able to translocate proteins. Interacts with the ribosome. Interacts with SecDF, and other proteins may be involved. Interacts with SecA.

The protein localises to the cell membrane. The central subunit of the protein translocation channel SecYEG. Consists of two halves formed by TMs 1-5 and 6-10. These two domains form a lateral gate at the front which open onto the bilayer between TMs 2 and 7, and are clamped together by SecE at the back. The channel is closed by both a pore ring composed of hydrophobic SecY resides and a short helix (helix 2A) on the extracellular side of the membrane which forms a plug. The plug probably moves laterally to allow the channel to open. The ring and the pore may move independently. The polypeptide is Protein translocase subunit SecY (Lactococcus lactis subsp. lactis (strain IL1403) (Streptococcus lactis)).